A 140-amino-acid polypeptide reads, in one-letter code: Large ribosomal subunit protein uL15 (140 aa).

Residues 1–31 are disordered; the sequence is MDTKKFRGSRTCGGGTHKNRRGAGNRGGRGK.

It belongs to the universal ribosomal protein uL15 family. Part of the 50S ribosomal subunit.

In terms of biological role, binds to the 23S rRNA. The protein is Large ribosomal subunit protein uL15 of Methanosarcina barkeri (strain Fusaro / DSM 804).